An 853-amino-acid chain; its full sequence is MFGLSKMLRVGEGRAVKRLKKIADDVIALEADYTDLTDEELKAKTHEFQERIAQGESVDDLLLEAFAVAREASWRVLGQKHYPVQIMGGAALHFGNVAEMRTGEGKTLTCVLPAYLNALEGKGVHVVTVNDYLAKRDAEWMGRVHRWLGLNVGVILANMQPAERREAYNADITYGTNNELGFDYLRDNMVRSLDELVQRGHHYAIVDEVDSILIDEARTPLIISGPVDGSSQWYSVFAQIVPRMTRDIHYEVDNRKRTVGVREEGVAFVEDQLGIDNLYAPEHSQLVSYLNNAIKAKELFNRDKDYIVRNGEVLIVDDFTGRVLDGRRYNEGMHQAIEAKENVEIKNENQTLATITLQNYFRLYDKLSGMTGTAETEASELHQIYKLDVIPIPTNRPNQREDMTDLVYKTQEAKFAAVVDDISERVTKGQPVLVGTTSVERSEYLSQLLQRRGIKHSVLNAKFHEQEAQIVAKAGLPGAVTVATNMAGRGTDIVLGGNADIIADINLRERGLNPVDTPEEYEAAWDAELARVKEKGAELAEKVREAGGLYVLGTERHESRRIDNQLRGRAGRQGDPGTTRFYLSMRDDLMVRFVGQTMENMMNRLNVPDDVPIEAKMVTNSIKSAQTSVENQNFEMRKNVLKYDEVMNEQRKVIYTERREILESADIAADIQKMIDDTIGAYVDAATATGYVEDWDLETLWNALESLYGPSFSAQELIDGDSYGESGELSASDLRKAVLEDAHKQYAELEENVTAIGGEAQMRNIERMVILPVIDTKWREHLYEMDYLKEGIGLRAMAQRDPLVEYQKEGGDMFNAMKDAVKEETVRQLFLLRKQFAVANEQPAETEEGTVEA.

Residues Gln-85, 103 to 107 (GEGKT), and Asp-492 contribute to the ATP site.

Belongs to the SecA family. As to quaternary structure, monomer and homodimer. Part of the essential Sec protein translocation apparatus which comprises SecA, SecYEG and auxiliary proteins SecDF. Other proteins may also be involved.

It localises to the cell membrane. It is found in the cytoplasm. The enzyme catalyses ATP + H2O + cellular proteinSide 1 = ADP + phosphate + cellular proteinSide 2.. In terms of biological role, part of the Sec protein translocase complex. Interacts with the SecYEG preprotein conducting channel. Has a central role in coupling the hydrolysis of ATP to the transfer of proteins into and across the cell membrane, serving as an ATP-driven molecular motor driving the stepwise translocation of polypeptide chains across the membrane. The protein is Protein translocase subunit SecA 1 of Corynebacterium diphtheriae (strain ATCC 700971 / NCTC 13129 / Biotype gravis).